We begin with the raw amino-acid sequence, 149 residues long: Protein E6 (149 aa).

2 zinc fingers span residues 30–66 (CVECKKPLQRSEVYDFAFADLTVVYREGNPFGICKLC) and 103–139 (CIICQRPLCPQEKKRHVDLNKRFHNISGRWAGRCAAC). The short motif at 147-149 (TAL) is the PDZ-binding domain element.

Belongs to the papillomaviridae E6 protein family. As to quaternary structure, forms homodimers. Interacts with ubiquitin-protein ligase UBE3A/E6-AP and thus forms a complex with human TP53. Interacts with human NFX1 and MAGI3. Interacts with human IRF3; this interaction inhibits the establishment of antiviral state. Interacts with human TYK2; this interaction inhibits JAK-STAT activation by interferon alpha. Interacts with host DLG1; this interaction leads to the proteasomal degradation of DLG1.

Its subcellular location is the host cytoplasm. It is found in the host nucleus. Functionally, this protein may be involved in the oncogenic potential of this virus (cervical neoplasia-associated virus). Its function is as follows. Plays a major role in the induction and maintenance of cellular transformation. Acts mainly as an oncoprotein by stimulating the destruction of many host cell key regulatory proteins. E6 associates with host UBE3A/E6-AP ubiquitin-protein ligase, and inactivates tumor suppressors TP53 and TP73 by targeting them to the 26S proteasome for degradation. In turn, DNA damage and chromosomal instabilities increase and lead to cell proliferation and cancer development. The complex E6/E6AP targets several other substrates to degradation via the proteasome including host DLG1 or NFX1, a repressor of human telomerase reverse transcriptase (hTERT). The resulting increased expression of hTERT prevents the shortening of telomere length leading to cell immortalization. Other cellular targets including BAK1, Fas-associated death domain-containing protein (FADD) and procaspase 8, are degraded by E6/E6AP causing inhibition of apoptosis. E6 also inhibits immune response by interacting with host IRF3 and TYK2. These interactions prevent IRF3 transcriptional activities and inhibit TYK2-mediated JAK-STAT activation by interferon alpha resulting in inhibition of the interferon signaling pathway. This chain is Protein E6, found in Homo sapiens (Human).